Here is a 335-residue protein sequence, read N- to C-terminus: Tetraacyldisaccharide 4'-kinase (335 aa).

Residue 58-65 (VVGGSGKT) participates in ATP binding.

Belongs to the LpxK family.

It catalyses the reaction a lipid A disaccharide + ATP = a lipid IVA + ADP + H(+). It participates in glycolipid biosynthesis; lipid IV(A) biosynthesis; lipid IV(A) from (3R)-3-hydroxytetradecanoyl-[acyl-carrier-protein] and UDP-N-acetyl-alpha-D-glucosamine: step 6/6. Its function is as follows. Transfers the gamma-phosphate of ATP to the 4'-position of a tetraacyldisaccharide 1-phosphate intermediate (termed DS-1-P) to form tetraacyldisaccharide 1,4'-bis-phosphate (lipid IVA). The protein is Tetraacyldisaccharide 4'-kinase of Hydrogenovibrio crunogenus (strain DSM 25203 / XCL-2) (Thiomicrospira crunogena).